Consider the following 60-residue polypeptide: Large ribosomal subunit protein bL32 (60 aa).

The segment at 1–60 is disordered; sequence MAVQQVKKSRSKRDMRRSHDSLTGPTLSTDKSTGELHLRHHVSPNGFYKGKKVVDTKSED. A compositionally biased stretch (basic residues) spans 7–16; the sequence is KKSRSKRDMR.

The protein belongs to the bacterial ribosomal protein bL32 family.

This chain is Large ribosomal subunit protein bL32, found in Francisella philomiragia subsp. philomiragia (strain ATCC 25017 / CCUG 19701 / FSC 153 / O#319-036).